Here is a 310-residue protein sequence, read N- to C-terminus: Olfactory receptor 5W2 (310 aa).

Residues 1-25 (MDWENCSSLTDFFLLGITNNPEMKV) are Extracellular-facing. The N-linked (GlcNAc...) asparagine glycan is linked to Asn-5. The helical transmembrane segment at 26-46 (TLFAVFLAVYIINFSANLGMI) threads the bilayer. The Cytoplasmic segment spans residues 47-54 (VLIRMDYQ). Residues 55 to 75 (LHTPMYFFLSHLSFCDLCYST) traverse the membrane as a helical segment. Over 76 to 99 (ATGPKMLVDLLAKNKSIPFYGCAL) the chain is Extracellular. The chain crosses the membrane as a helical span at residues 100-120 (QFLVFCIFADSECLLLSVMAF). Over 121-139 (DRYKAIINPLLYTVNMSSR) the chain is Cytoplasmic. The helical transmembrane segment at 140 to 160 (VCYLLLTGVYLVGIADALIHM) threads the bilayer. The Extracellular segment spans residues 161–196 (TLAFRLCFCGSNEINHFFCDIPPLLLLSRSDTQVNE). The helical transmembrane segment at 197 to 217 (LVLFTVFGFIELSTISGVFIS) threads the bilayer. Over 218 to 237 (YCYIILSVLEIHSAEGRFKA) the chain is Cytoplasmic. A helical transmembrane segment spans residues 238 to 258 (LSTCTSHLSAVAIFQGTLLFM). At 259–271 (YFRPSSSYSLDQD) the chain is on the extracellular side. The helical transmembrane segment at 272–292 (KMTSLFYTLVVPMLNPLIYSL) threads the bilayer. At 293 to 310 (RNKDVKEALKKLKNKILF) the chain is on the cytoplasmic side.

The protein belongs to the G-protein coupled receptor 1 family.

The protein localises to the cell membrane. Its function is as follows. Odorant receptor. This is Olfactory receptor 5W2 (OR5W2) from Homo sapiens (Human).